A 513-amino-acid polypeptide reads, in one-letter code: ATP synthase subunit alpha (513 aa).

Residue 169–176 participates in ATP binding; the sequence is GDRQIGKS.

Belongs to the ATPase alpha/beta chains family. F-type ATPases have 2 components, CF(1) - the catalytic core - and CF(0) - the membrane proton channel. CF(1) has five subunits: alpha(3), beta(3), gamma(1), delta(1), epsilon(1). CF(0) has three main subunits: a(1), b(2) and c(9-12). The alpha and beta chains form an alternating ring which encloses part of the gamma chain. CF(1) is attached to CF(0) by a central stalk formed by the gamma and epsilon chains, while a peripheral stalk is formed by the delta and b chains.

Its subcellular location is the cell inner membrane. It catalyses the reaction ATP + H2O + 4 H(+)(in) = ADP + phosphate + 5 H(+)(out). Functionally, produces ATP from ADP in the presence of a proton gradient across the membrane. The alpha chain is a regulatory subunit. The protein is ATP synthase subunit alpha of Colwellia psychrerythraea (strain 34H / ATCC BAA-681) (Vibrio psychroerythus).